A 471-amino-acid chain; its full sequence is Ubiquitin-conjugating enzyme E2 variant 3 (471 aa).

The region spanning 2–145 (DVNSEPVKKV…EEEPPLGTKS (144 aa)) is the UEV domain. Position 183–211 (183–211 (GDLGIAAVLSIMAKSCVDKLVLIDIPENS)) interacts with NAD(+).

The protein in the N-terminal section; belongs to the ubiquitin-conjugating enzyme family. UEV subfamily. In the C-terminal section; belongs to the LDH/MDH superfamily. In terms of assembly, homodimer.

Functionally, possible negative regulator of polyubiquitination. The polypeptide is Ubiquitin-conjugating enzyme E2 variant 3 (uevld) (Danio rerio (Zebrafish)).